Here is a 121-residue protein sequence, read N- to C-terminus: Centrocin 2 (121 aa).

An N-terminal signal peptide occupies residues 1-20 (MMIKIAVVLCAVMATSMVFA). Residues 21 to 50 (NDVKEQELADLLDLLISEEVSSPDDAVAES) constitute a propeptide that is removed on maturation. A 6'-bromotryptophan mark is found at Trp51 and Trp59. Cys77 and Cys112 are joined by a disulfide. The propeptide occupies 83-106 (SPQEARAKVLEAFPEMKESDLDEE). A Pyrrolidone carboxylic acid modification is found at Gln107. Histidine amide is present on His119.

As to quaternary structure, heterodimer of a light and a heavy chain, probably disulfide-linked.

In terms of biological role, has antimicrobial activity against Gram-negative bacteria, Gram-positive bacteria and against fungi with minimum inhibitory concentration (MIC) between 0.78 uM and 50 uM. Shows little hemolytic activity at concentrations up to 12.5 uM but &gt;50% lysis at 100 uM. This is Centrocin 2 from Echinus esculentus (Sea urchin).